We begin with the raw amino-acid sequence, 173 residues long: Small ribosomal subunit protein uS5 (173 aa).

An S5 DRBM domain is found at 17–80 (LREKMIAVNR…EESRRNMIKV (64 aa)).

Belongs to the universal ribosomal protein uS5 family. Part of the 30S ribosomal subunit. Contacts proteins S4 and S8.

Its function is as follows. With S4 and S12 plays an important role in translational accuracy. Functionally, located at the back of the 30S subunit body where it stabilizes the conformation of the head with respect to the body. The sequence is that of Small ribosomal subunit protein uS5 from Delftia acidovorans (strain DSM 14801 / SPH-1).